We begin with the raw amino-acid sequence, 282 residues long: Pantothenate synthetase (282 aa).

30–37 (MGYLHAGH) is a binding site for ATP. Histidine 37 functions as the Proton donor in the catalytic mechanism. Glutamine 61 provides a ligand contact to (R)-pantoate. Glutamine 61 lines the beta-alanine pocket. Residue 147 to 150 (GKKD) participates in ATP binding. Glutamine 153 serves as a coordination point for (R)-pantoate. Residues valine 176 and 184 to 187 (MSSR) contribute to the ATP site.

This sequence belongs to the pantothenate synthetase family. As to quaternary structure, homodimer.

The protein resides in the cytoplasm. The catalysed reaction is (R)-pantoate + beta-alanine + ATP = (R)-pantothenate + AMP + diphosphate + H(+). Its pathway is cofactor biosynthesis; (R)-pantothenate biosynthesis; (R)-pantothenate from (R)-pantoate and beta-alanine: step 1/1. Functionally, catalyzes the condensation of pantoate with beta-alanine in an ATP-dependent reaction via a pantoyl-adenylate intermediate. The chain is Pantothenate synthetase from Geotalea uraniireducens (strain Rf4) (Geobacter uraniireducens).